We begin with the raw amino-acid sequence, 251 residues long: BRI3-binding protein (251 aa).

A run of 4 helical transmembrane segments spans residues 13–33 (AGLL…PGAQ), 125–145 (ALLL…TLGF), 146–166 (TFSV…VVLF), and 185–205 (VLPL…GFYW). Residues 217–247 (NPSVEEKLEHLEKQVRLLNIRLNRVLESLDR) adopt a coiled-coil conformation. Lys-229 is modified (N6-acetyllysine). Ser-248 carries the post-translational modification Phosphoserine.

In terms of assembly, interacts with LETMD1. Interacts with BRI3 (isoforms 1 and 2); the interaction with isoform 2 is weaker than with isoform 1. Interacts with BRI3; the interaction is weak. Interacts with TMEM238L. Most abundantly expressed in brain, liver and kidney. Overexpressed in leukemia and lymphoma cell lines, as well as in various carcinomas.

The protein resides in the mitochondrion outer membrane. Functionally, involved in tumorigenesis and may function by stabilizing p53/TP53. The sequence is that of BRI3-binding protein from Homo sapiens (Human).